The following is a 63-amino-acid chain: Large ribosomal subunit protein bL32 (63 aa).

The disordered stretch occupies residues 1-22; it reads MANPKAKMSKSRRDKRRAQFNA. Over residues 7 to 18 the composition is skewed to basic residues; that stretch reads KMSKSRRDKRRA.

Belongs to the bacterial ribosomal protein bL32 family.

The sequence is that of Large ribosomal subunit protein bL32 from Chlorobium limicola (strain DSM 245 / NBRC 103803 / 6330).